The primary structure comprises 444 residues: Cerebral cavernous malformations 2 protein (444 aa).

A disordered region spans residues 1–37 (MEEEGKKGKKPGIVSPFKRVFLKGEKSRDKKAHEKVT). A Phosphoserine modification is found at S15. Over residues 22-37 (LKGEKSRDKKAHEKVT) the composition is skewed to basic and acidic residues. The 190-residue stretch at 59–248 (LSDYIEKEVK…TPTHHLSLHS (190 aa)) folds into the PID domain. At S164 the chain carries Phosphoserine. The harmonin homology domain stretch occupies residues 283 to 376 (SKTISESELS…NFLETIGVKD (94 aa)). 2 positions are modified to phosphoserine: S384 and S393. The segment at 391–423 (ALSTTSSSTTNGNRATGSSDDRSAPSEGDEWDR) is disordered. Low complexity predominate over residues 392-408 (LSTTSSSTTNGNRATGS). A Phosphothreonine modification is found at T394. A Phosphoserine modification is found at S396. Position 399 is a phosphothreonine (T399).

Belongs to the CCM2 family. In terms of assembly, part of a complex with MAP2K3, MAP3K3 and RAC1. Binds RAC1 directly and independently of its nucleotide-bound state. Interacts with HEG1 and KRIT1; KRIT1 greatly facilitates the interaction with HEG1. Interacts with PDCD10.

The protein localises to the cytoplasm. Functionally, component of the CCM signaling pathway which is a crucial regulator of heart and vessel formation and integrity. May act through the stabilization of endothelial cell junctions. May function as a scaffold protein for MAP2K3-MAP3K3 signaling. Seems to play a major role in the modulation of MAP3K3-dependent p38 activation induced by hyperosmotic shock. The chain is Cerebral cavernous malformations 2 protein (CCM2) from Homo sapiens (Human).